A 296-amino-acid polypeptide reads, in one-letter code: MNFQDIISSLNSFWSNQGCVLLQPYDTEKGAGTMSPHTILRAIGPEPWSVAYVEPCRRPTDGRYGENPNRAQHYYQYQVIIKPSPDEIQEKYLSSLEALGIKQEQHDIRFVEDNWESPTLGAWGVGWEVWLDGMEVTQFTYFQQCGGLDCRPVSIEITYGLERIAMYLQDVKSIWDLRWNDSYSYGDIWLPYEKSNCKFNFEGSNPERLFKLFDLYEEEAKSLLNKRLSSPALDFVLKCSHTFNLLEARGVISVTERTATIARIRNLARKVAELWLEERKNIGFPLLKNSQTSKNS.

This sequence belongs to the class-II aminoacyl-tRNA synthetase family. In terms of assembly, tetramer of two alpha and two beta subunits.

Its subcellular location is the cytoplasm. The catalysed reaction is tRNA(Gly) + glycine + ATP = glycyl-tRNA(Gly) + AMP + diphosphate. The protein is Glycine--tRNA ligase alpha subunit of Prochlorococcus marinus (strain SARG / CCMP1375 / SS120).